The sequence spans 142 residues: Conidial pigment biosynthesis dehydratase EthD (142 aa).

The EthD domain maps to Pro25–Ser121.

Belongs to the tpcK family.

It functions in the pathway pigment biosynthesis. Dehydratase; part of the Pks1 gene cluster that mediates the biosynthesis of an anthraquinone derivative pigment that contributes to conidial pigmentation that provides protection from UV radiation, heat and cold stress. The polyketide synthase Pks1 produces 1-acetyl-2,4,6,8-tetrahydroxy-9,10-anthraquinone though condensation of acetyl-CoA with malonyl-CoA. The dehydratase EthD and the laccase Mlac1 further convert the anthraquinone derivative into the final conidial pigment. The chain is Conidial pigment biosynthesis dehydratase EthD from Metarhizium robertsii (strain ARSEF 23 / ATCC MYA-3075) (Metarhizium anisopliae (strain ARSEF 23)).